A 154-amino-acid polypeptide reads, in one-letter code: Ribonuclease H (154 aa).

One can recognise an RNase H type-1 domain in the interval 3-144 (ELPVVTIYTD…ADQLARDGIV (142 aa)). Mg(2+) contacts are provided by D12, E50, D72, and D136.

The protein belongs to the RNase H family. Monomer. Mg(2+) serves as cofactor.

It is found in the cytoplasm. The enzyme catalyses Endonucleolytic cleavage to 5'-phosphomonoester.. In terms of biological role, endonuclease that specifically degrades the RNA of RNA-DNA hybrids. The chain is Ribonuclease H from Bradyrhizobium diazoefficiens (strain JCM 10833 / BCRC 13528 / IAM 13628 / NBRC 14792 / USDA 110).